We begin with the raw amino-acid sequence, 155 residues long: Large ribosomal subunit protein uL15 (155 aa).

Positions 1-16 (MVRRFKRAVKYRRGSR) are enriched in basic residues. A disordered region spans residues 1 to 35 (MVRRFKRAVKYRRGSRTHGWGRVGQHRKSGGSGGK).

This sequence belongs to the universal ribosomal protein uL15 family. In terms of assembly, part of the 50S ribosomal subunit.

Binds to the 23S rRNA. This is Large ribosomal subunit protein uL15 from Pyrobaculum arsenaticum (strain DSM 13514 / JCM 11321 / PZ6).